We begin with the raw amino-acid sequence, 530 residues long: GMP synthase [glutamine-hydrolyzing] (530 aa).

In terms of domain architecture, Glutamine amidotransferase type-1 spans 4–205; the sequence is RILILDYGSQ…VREICGCEGD (202 aa). Cysteine 84 functions as the Nucleophile in the catalytic mechanism. Catalysis depends on residues histidine 179 and glutamate 181. The 193-residue stretch at 206–398 folds into the GMPS ATP-PPase domain; sequence WNMPDYISEA…LGLPPQMVYR (193 aa). 233–239 contacts ATP; that stretch reads SGGVDSS.

In terms of assembly, homodimer.

It catalyses the reaction XMP + L-glutamine + ATP + H2O = GMP + L-glutamate + AMP + diphosphate + 2 H(+). Its pathway is purine metabolism; GMP biosynthesis; GMP from XMP (L-Gln route): step 1/1. Its function is as follows. Catalyzes the synthesis of GMP from XMP. The sequence is that of GMP synthase [glutamine-hydrolyzing] from Bordetella avium (strain 197N).